Here is a 514-residue protein sequence, read N- to C-terminus: Maturase K (514 aa).

The protein belongs to the intron maturase 2 family. MatK subfamily.

It localises to the plastid. The protein localises to the chloroplast. In terms of biological role, usually encoded in the trnK tRNA gene intron. Probably assists in splicing its own and other chloroplast group II introns. The polypeptide is Maturase K (Dioon spinulosum (Gum palm)).